The sequence spans 844 residues: Proto-oncogene vav (844 aa).

The 119-residue stretch at 1 to 119 (MELWRQCTHW…YTLSALSWTP (119 aa)) folds into the Calponin-homology (CH) domain. A DH domain is found at 193-372 (KRCCCLREIQ…RDLAQCVNEV (180 aa)). Residues 401–503 (RPKIDGELKI…WMEQFEMAIS (103 aa)) form the PH domain. Residues 514–563 (GHDFQMFSFEETTSCKACQMLLRGTFYQGYRCQRCRAPAHKECLGRVPPC) form a Phorbol-ester/DAG-type zinc finger. Positions 567–589 (GQDYSGTMKKDKPHRRAQDKKRN) are disordered. Positions 591–659 (LGLPKMEVCQ…PCNRVKPYVH (69 aa)) constitute an SH3 1 domain. Positions 670 to 764 (WYAGPMERAG…SLDTTLQFPF (95 aa)) constitute an SH2 domain. Residues 781–841 (KIFGTAKARY…PSNYVEEDYS (61 aa)) form the SH3 2 domain. Residues Y825 and Y843 each carry the phosphotyrosine modification.

Interacts with SHB. Interacts with APS, DOCK2, GRB2, GRB3, DOCK2, SLA, TEC and ZNF655/VIK. Interacts with SIAH2; without leading to its degradation. Associates with BLNK, PLCG1, GRB2 and NCK1 in a B-cell antigen receptor-dependent fashion. Interacts with CBLB; which inhibits tyrosine phosphorylation and down-regulates activity. May interact with CCPG1. Interacts with CLNK. Interacts with THEMIS2. Interacts with NEK3 and this interaction is prolactin-dependent. Interacts with ITK. Interacts with PTK2B/PYK2. Interacts with HCK. Interacts with PTK2B/PYK2. Interacts (via SH2 domain) with SYK. Interacts with ANKRD54. Interacts with CD6. Interacts with LCP2; this interaction plays a role in TCR-mediated cytokine production. Phosphorylated by FYN. Phosphorylated on tyrosine residues by HCK in response to IFNG and bacterial lipopolysaccharide (LPS).

In terms of biological role, couples tyrosine kinase signals with the activation of the Rho/Rac GTPases, thus leading to cell differentiation and/or proliferation. The protein is Proto-oncogene vav (VAV1) of Bos taurus (Bovine).